The chain runs to 750 residues: Photosystem I P700 chlorophyll a apoprotein A1 (750 aa).

8 helical membrane passes run 70 to 93, 156 to 179, 195 to 219, 291 to 309, 346 to 369, 385 to 411, 433 to 455, and 531 to 549; these read VFSAHFGQLSIIFLWLSGMYFHGA, LYCTAIGALIFASLMLFAGWFHYH, LNHHLAGLLGLGSLSWAGHQIHVSL, IAHHHLAIAILFLIAGHMY, WHAQLSLNLAMLGSTTIVVAHHMY, LSLFTHHMWIGGFLIVGAAAHAAIFMV, AIISHLNWVCIFLGFHSFGLYIH, and FLVHHIHAFTIHVTVLILL. 2 residues coordinate [4Fe-4S] cluster: Cys573 and Cys582. Helical transmembrane passes span 589–610 and 664–686; these read HVFLGLFWMYNSISVVIFHFSW and LSAYGLFFLGAHFVWAFSLMFLF. His675 provides a ligand contact to chlorophyll a'. Met683 and Tyr691 together coordinate chlorophyll a. Position 692 (Trp692) interacts with phylloquinone. A helical membrane pass occupies residues 724–744; it reads AVGVTHYLLGGIATTWAFFLA.

The protein belongs to the PsaA/PsaB family. As to quaternary structure, the PsaA/B heterodimer binds the P700 chlorophyll special pair and subsequent electron acceptors. PSI consists of a core antenna complex that captures photons, and an electron transfer chain that converts photonic excitation into a charge separation. The eukaryotic PSI reaction center is composed of at least 11 subunits. P700 is a chlorophyll a/chlorophyll a' dimer, A0 is one or more chlorophyll a, A1 is one or both phylloquinones and FX is a shared 4Fe-4S iron-sulfur center. serves as cofactor.

Its subcellular location is the plastid. It localises to the chloroplast thylakoid membrane. It carries out the reaction reduced [plastocyanin] + hnu + oxidized [2Fe-2S]-[ferredoxin] = oxidized [plastocyanin] + reduced [2Fe-2S]-[ferredoxin]. Its function is as follows. PsaA and PsaB bind P700, the primary electron donor of photosystem I (PSI), as well as the electron acceptors A0, A1 and FX. PSI is a plastocyanin-ferredoxin oxidoreductase, converting photonic excitation into a charge separation, which transfers an electron from the donor P700 chlorophyll pair to the spectroscopically characterized acceptors A0, A1, FX, FA and FB in turn. Oxidized P700 is reduced on the lumenal side of the thylakoid membrane by plastocyanin. This Saccharum hybrid (Sugarcane) protein is Photosystem I P700 chlorophyll a apoprotein A1.